The sequence spans 622 residues: Pyranose 2-oxidase (622 aa).

A signal peptide spans 1-28 (MSTSSSDPFYNFAKTSFKSAAAQKASAT). A propeptide spanning residues 29-38 (SLPPLPGPDQ) is cleaved from the precursor. Histidine 167 is modified (tele-8alpha-FAD histidine). Substrate is bound by residues glutamine 448 and histidine 450. The Proton acceptor role is filled by histidine 548. The active site involves asparagine 593.

Belongs to the GMC oxidoreductase family. As to quaternary structure, homotetramer. FAD serves as cofactor.

Its subcellular location is the periplasm. It catalyses the reaction D-glucose + O2 = 2-dehydro-D-glucose + H2O2. Functionally, catalyzes the oxidation of various aldopyranoses and disaccharides on carbon-2 to the corresponding 2-keto sugars concomitant with the reduction of O(2) to H(2)O(2). Plays an important role in lignin degradation of wood rot fungi by supplying the essential cosubstrate H(2)O(2) for the ligninolytic peroxidases, lignin peroxidase and manganese-dependent peroxidase. The sequence is that of Pyranose 2-oxidase (p2ox) from Trametes pubescens (White-rot fungus).